The primary structure comprises 279 residues: 32 kDa beta-galactoside-binding lectin (279 aa).

2 Galectin domains span residues 13–144 and 152–279; these read YRSV…VHWG and YESG…IQIQ. 213–219 contributes to the a beta-D-galactoside binding site; the sequence is WGNEERE.

Post-translationally, the N-terminus is blocked.

Binds galactose. This chain is 32 kDa beta-galactoside-binding lectin (lec-1), found in Caenorhabditis elegans.